The following is a 451-amino-acid chain: D-ribitol-5-phosphate cytidylyltransferase (451 aa).

The segment at 1-29 is disordered; the sequence is MEAGPPGSARPAEPGPCLSGQRGADHTAS.

The protein belongs to the IspD/TarI cytidylyltransferase family. IspD subfamily. As to quaternary structure, homodimer. As to expression, ubiquitously expressed, with high expression in brain.

The protein localises to the cytoplasm. It localises to the cytosol. The enzyme catalyses D-ribitol 5-phosphate + CTP + H(+) = CDP-L-ribitol + diphosphate. The catalysed reaction is D-ribose 5-phosphate + CTP + H(+) = CDP-D-ribose + diphosphate. It carries out the reaction D-ribulose 5-phosphate + CTP + H(+) = CDP-D-ribulose + diphosphate. The protein operates within protein modification; protein glycosylation. Functionally, cytidylyltransferase required for protein O-linked mannosylation. Catalyzes the formation of CDP-ribitol nucleotide sugar from D-ribitol 5-phosphate. CDP-ribitol is a substrate of FKTN during the biosynthesis of the phosphorylated O-mannosyl trisaccharide (N-acetylgalactosamine-beta-3-N-acetylglucosamine-beta-4-(phosphate-6-)mannose), a carbohydrate structure present in alpha-dystroglycan (DAG1), which is required for binding laminin G-like domain-containing extracellular proteins with high affinity. Shows activity toward other pentose phosphate sugars and mediates formation of CDP-ribulose or CDP-ribose using CTP and ribulose-5-phosphate or ribose-5-phosphate, respectively. Not Involved in dolichol production. The chain is D-ribitol-5-phosphate cytidylyltransferase from Homo sapiens (Human).